Consider the following 316-residue polypeptide: Fe-S cluster assembly protein DRE2 (316 aa).

Residues 4-156 (SMPVATTVAA…KPQHVASTSV (153 aa)) form an N-terminal SAM-like domain region. The interval 157 to 202 (PLKSRQPGALLNRKKTDPAKKQALWALSSPSTPKIDPEALLTAEDK) is linker. [2Fe-2S] cluster contacts are provided by cysteine 209, cysteine 223, cysteine 226, and cysteine 228. A fe-S binding site A region spans residues 209-228 (CEPVRSSAPRRKKACKSCSC). Residues cysteine 279, cysteine 282, cysteine 290, and cysteine 293 each coordinate [4Fe-4S] cluster. Short sequence motifs (cx2C motif) lie at residues 279–282 (CGSC) and 290–293 (CAGC). Residues 279–293 (CGSCFLGDAFRCAGC) form a fe-S binding site B region.

Belongs to the anamorsin family. As to quaternary structure, monomer. Interacts with TAH18. Interacts with MIA40. It depends on [2Fe-2S] cluster as a cofactor. [4Fe-4S] cluster is required as a cofactor.

The protein resides in the cytoplasm. It localises to the mitochondrion intermembrane space. Functionally, component of the cytosolic iron-sulfur (Fe-S) protein assembly (CIA) machinery required for the maturation of extramitochondrial Fe-S proteins. Part of an electron transfer chain functioning in an early step of cytosolic Fe-S biogenesis, facilitating the de novo assembly of a [4Fe-4S] cluster on the scaffold complex CFD1-NBP35. Electrons are transferred to DRE2 from NADPH via the FAD- and FMN-containing protein TAH18. TAH18-DRE2 are also required for the assembly of the diferric tyrosyl radical cofactor of ribonucleotide reductase (RNR), probably by providing electrons for reduction during radical cofactor maturation in the catalytic small subunit RNR2. This is Fe-S cluster assembly protein DRE2 from Laccaria bicolor (strain S238N-H82 / ATCC MYA-4686) (Bicoloured deceiver).